Consider the following 88-residue polypeptide: Beta-insect excitatory toxin LqhIT1a (88 aa).

The signal sequence occupies residues 1–18; that stretch reads MKFFLLFLVVLPIMGVLG. Positions 20-83 constitute an LCN-type CS-alpha/beta domain; sequence KNGYAVDSKG…ISGTTKKYCD (64 aa). Disulfide bonds link Cys-34–Cys-55, Cys-40–Cys-60, Cys-44–Cys-62, and Cys-56–Cys-82.

It belongs to the long (4 C-C) scorpion toxin superfamily. Sodium channel inhibitor family. Beta subfamily. As to expression, expressed by the venom gland.

The protein resides in the secreted. Its function is as follows. Excitatory insect toxins induce a spastic paralysis. They bind voltage-independently at site-4 of sodium channels (Nav) and shift the voltage of activation toward more negative potentials thereby affecting sodium channel activation and promoting spontaneous and repetitive firing. The chain is Beta-insect excitatory toxin LqhIT1a from Leiurus hebraeus (Hebrew deathstalker scorpion).